Consider the following 346-residue polypeptide: Carbamoyl phosphate synthase small chain (346 aa).

Residues 1 to 160 (MEDGSVFAGR…SVKEPVLLGE (160 aa)) are CPSase. 3 residues coordinate L-glutamine: Ser39, Gly209, and Gly211. The 183-residue stretch at 164 to 346 (CIGVVDCGVK…FLKLVERHGH (183 aa)) folds into the Glutamine amidotransferase type-1 domain. The Nucleophile role is filled by Cys237. Positions 238, 241, 280, 282, and 283 each coordinate L-glutamine. Active-site residues include His320 and Glu322.

Belongs to the CarA family. As to quaternary structure, composed of two chains; the small (or glutamine) chain promotes the hydrolysis of glutamine to ammonia, which is used by the large (or ammonia) chain to synthesize carbamoyl phosphate. Tetramer of heterodimers (alpha,beta)4.

The enzyme catalyses hydrogencarbonate + L-glutamine + 2 ATP + H2O = carbamoyl phosphate + L-glutamate + 2 ADP + phosphate + 2 H(+). The catalysed reaction is L-glutamine + H2O = L-glutamate + NH4(+). It functions in the pathway amino-acid biosynthesis; L-arginine biosynthesis; carbamoyl phosphate from bicarbonate: step 1/1. The protein operates within pyrimidine metabolism; UMP biosynthesis via de novo pathway; (S)-dihydroorotate from bicarbonate: step 1/3. Small subunit of the glutamine-dependent carbamoyl phosphate synthetase (CPSase). CPSase catalyzes the formation of carbamoyl phosphate from the ammonia moiety of glutamine, carbonate, and phosphate donated by ATP, constituting the first step of 2 biosynthetic pathways, one leading to arginine and/or urea and the other to pyrimidine nucleotides. The small subunit (glutamine amidotransferase) binds and cleaves glutamine to supply the large subunit with the substrate ammonia. The chain is Carbamoyl phosphate synthase small chain from Pyrobaculum aerophilum (strain ATCC 51768 / DSM 7523 / JCM 9630 / CIP 104966 / NBRC 100827 / IM2).